We begin with the raw amino-acid sequence, 203 residues long: MDKKIADLLQELQSSSNVTSNQLENVDKSSIPLSKARKPSDFELNNSIEDAEKIKTYPAALRYIFALNSRHPEKLQKLRKMKAMQERQERNWSLERQRLVQHFESKTKLQEILKPLSSDPKLKQPSNCLNDQTNNDSAQTLDDNRALQEFDEQVVQLTNRMYKEQLAILADLKIPLFLSVNNDEELSEDQKRLLQLLQDLLGA.

The disordered stretch occupies residues 117 to 138; it reads SSDPKLKQPSNCLNDQTNNDSA. The segment covering 124–138 has biased composition (polar residues); sequence QPSNCLNDQTNNDSA.

It localises to the cytoplasm. Its subcellular location is the nucleus. This is an uncharacterized protein from Schizosaccharomyces pombe (strain 972 / ATCC 24843) (Fission yeast).